Consider the following 741-residue polypeptide: Penicillin-binding protein 1B (741 aa).

Topologically, residues Met-1–Phe-12 are cytoplasmic. A helical; Signal-anchor for type II membrane protein transmembrane segment spans residues Leu-13–Phe-33. Residues Lys-34–Thr-741 lie on the Extracellular side of the membrane. The segment at Leu-139–Val-311 is transglycosylase. The active-site Proton donor; for transglycosylase activity is the Glu-177. The transpeptidase stretch occupies residues Glu-395–Asn-687. The active-site Acyl-ester intermediate; for transpeptidase activity is Ser-454.

In the N-terminal section; belongs to the glycosyltransferase 51 family. The protein in the C-terminal section; belongs to the transpeptidase family.

The protein localises to the cell membrane. It catalyses the reaction [GlcNAc-(1-&gt;4)-Mur2Ac(oyl-L-Ala-gamma-D-Glu-L-Lys-D-Ala-D-Ala)](n)-di-trans,octa-cis-undecaprenyl diphosphate + beta-D-GlcNAc-(1-&gt;4)-Mur2Ac(oyl-L-Ala-gamma-D-Glu-L-Lys-D-Ala-D-Ala)-di-trans,octa-cis-undecaprenyl diphosphate = [GlcNAc-(1-&gt;4)-Mur2Ac(oyl-L-Ala-gamma-D-Glu-L-Lys-D-Ala-D-Ala)](n+1)-di-trans,octa-cis-undecaprenyl diphosphate + di-trans,octa-cis-undecaprenyl diphosphate + H(+). It carries out the reaction Preferential cleavage: (Ac)2-L-Lys-D-Ala-|-D-Ala. Also transpeptidation of peptidyl-alanyl moieties that are N-acyl substituents of D-alanine.. The protein operates within cell wall biogenesis; peptidoglycan biosynthesis. In terms of biological role, cell wall formation. Synthesis of cross-linked peptidoglycan from the lipid intermediates. The enzyme has a penicillin-insensitive transglycosylase N-terminal domain (formation of linear glycan strands) and a penicillin-sensitive transpeptidase C-terminal domain (cross-linking of the peptide subunits). The sequence is that of Penicillin-binding protein 1B (mrcB) from Buchnera aphidicola subsp. Baizongia pistaciae (strain Bp).